The following is an 81-amino-acid chain: Carboxysome shell vertex protein CsoS4B (81 aa).

In terms of domain architecture, BMV spans 1-77; that stretch reads MEVMRVRSDL…TDLTIGGIID (77 aa).

The protein belongs to the CcmL/EutN family. CsoS4 subfamily. In terms of assembly, homopentamer.

The protein resides in the carboxysome. Its function is as follows. Probably forms vertices in the carboxysome. Has been modeled to induce curvature upon insertion into an otherwise flat hexagonal layer of major carboxysome subunits. A minor shell protein, only 12 pentamers of CsoS4A/CsoS4B are calculated to be present in each carboxysome. The 2 CsoS4 proteins contribute to the impermeability of the carboxysome to CO(2). Its central pore is probably too small to allow passage of metabolites; its function might be to anchor different proteins or metabolites to the carboxysome. In terms of biological role, unlike beta-carboxysomes, alpha-carboxysomes (Cb) can form without cargo protein. CsoS2 is essential for Cb formation and is also capable of targeting foreign proteins to the Cb. The Cb shell assembles with the aid of CsoS2; CsoS1A, CsoS1B and CsoS1C form the majority of the shell while CsoS4A and CsoS4B form vertices. CsoS1D forms pseudohexamers that probably control metabolite flux into and out of the shell. The protein is Carboxysome shell vertex protein CsoS4B of Halothiobacillus neapolitanus (strain ATCC 23641 / c2) (Thiobacillus neapolitanus).